Reading from the N-terminus, the 99-residue chain is Integration host factor subunit alpha (99 aa).

It belongs to the bacterial histone-like protein family. Heterodimer of an alpha and a beta chain.

Its function is as follows. This protein is one of the two subunits of integration host factor, a specific DNA-binding protein that functions in genetic recombination as well as in transcriptional and translational control. The chain is Integration host factor subunit alpha from Nitrosococcus oceani (strain ATCC 19707 / BCRC 17464 / JCM 30415 / NCIMB 11848 / C-107).